Reading from the N-terminus, the 30-residue chain is Trypsin inhibitor 3 (30 aa).

Gln1 is modified (pyrrolidone carboxylic acid). Disulfide bonds link Cys4/Cys21, Cys11/Cys23, and Cys17/Cys29.

It localises to the secreted. Functionally, inhibits trypsin; probably participates in a plant defense mechanism. The polypeptide is Trypsin inhibitor 3 (Momordica cochinchinensis (Spiny bitter cucumber)).